The chain runs to 359 residues: DNA polymerase IV (359 aa).

Positions 7–188 (IIHIDMDAFY…LPIGKFFGVG (182 aa)) constitute a UmuC domain. 2 residues coordinate Mg(2+): D11 and D106. Residue E107 is part of the active site.

The protein belongs to the DNA polymerase type-Y family. Monomer. The cofactor is Mg(2+).

Its subcellular location is the cytoplasm. It carries out the reaction DNA(n) + a 2'-deoxyribonucleoside 5'-triphosphate = DNA(n+1) + diphosphate. Its function is as follows. Poorly processive, error-prone DNA polymerase involved in untargeted mutagenesis. Copies undamaged DNA at stalled replication forks, which arise in vivo from mismatched or misaligned primer ends. These misaligned primers can be extended by PolIV. Exhibits no 3'-5' exonuclease (proofreading) activity. May be involved in translesional synthesis, in conjunction with the beta clamp from PolIII. In Clostridium perfringens (strain SM101 / Type A), this protein is DNA polymerase IV.